A 362-amino-acid chain; its full sequence is MAQVYNFSSGPAMLPAEVLKLAQQELCDWHGLGTSVMEISHRGKEFIQVAEEAEQDFRALLNIPSNYKVLFCHGGGRGQFAGIPLNILGDKKVADYVDAGYWAASAVKEAKKYCTPNVIDAKITVDGKRAVKPMSEWQLTPGAAYLHYCPNETIDGIAIDETPNFGDDVIVTADFSSTILSREIDVNRFGVIYAGAQKNIGPAGLTLVIVREDLLGKASVACPSILDYTVLSENDSMFNTPPTFAWYLAGLVFKWLKQQGGVAAMDKINQQKAELLYGVIDNSGFYRNDVAQANRSRMNVPFQLADSALDKLFLEESFAAGLHALKGHRVVGGMRASIYNAMPLDGVKTLTDFMLDFERRHG.

Residues S9 and R42 each contribute to the L-glutamate site. Pyridoxal 5'-phosphate-binding positions include 76–77 (GR), W102, T153, D174, and Q197. K198 bears the N6-(pyridoxal phosphate)lysine mark. A pyridoxal 5'-phosphate-binding site is contributed by 239–240 (NT).

This sequence belongs to the class-V pyridoxal-phosphate-dependent aminotransferase family. SerC subfamily. In terms of assembly, homodimer. It depends on pyridoxal 5'-phosphate as a cofactor.

Its subcellular location is the cytoplasm. The enzyme catalyses O-phospho-L-serine + 2-oxoglutarate = 3-phosphooxypyruvate + L-glutamate. It carries out the reaction 4-(phosphooxy)-L-threonine + 2-oxoglutarate = (R)-3-hydroxy-2-oxo-4-phosphooxybutanoate + L-glutamate. It functions in the pathway amino-acid biosynthesis; L-serine biosynthesis; L-serine from 3-phospho-D-glycerate: step 2/3. The protein operates within cofactor biosynthesis; pyridoxine 5'-phosphate biosynthesis; pyridoxine 5'-phosphate from D-erythrose 4-phosphate: step 3/5. Catalyzes the reversible conversion of 3-phosphohydroxypyruvate to phosphoserine and of 3-hydroxy-2-oxo-4-phosphonooxybutanoate to phosphohydroxythreonine. This Klebsiella pneumoniae subsp. pneumoniae (strain ATCC 700721 / MGH 78578) protein is Phosphoserine aminotransferase.